The following is a 428-amino-acid chain: Histidine--tRNA ligase (428 aa).

The protein belongs to the class-II aminoacyl-tRNA synthetase family. As to quaternary structure, homodimer.

It localises to the cytoplasm. The enzyme catalyses tRNA(His) + L-histidine + ATP = L-histidyl-tRNA(His) + AMP + diphosphate + H(+). The polypeptide is Histidine--tRNA ligase (Chromohalobacter salexigens (strain ATCC BAA-138 / DSM 3043 / CIP 106854 / NCIMB 13768 / 1H11)).